The sequence spans 316 residues: Methionyl-tRNA formyltransferase (316 aa).

(6S)-5,6,7,8-tetrahydrofolate is bound at residue 112-115 (SLLP).

It belongs to the Fmt family.

It catalyses the reaction L-methionyl-tRNA(fMet) + (6R)-10-formyltetrahydrofolate = N-formyl-L-methionyl-tRNA(fMet) + (6S)-5,6,7,8-tetrahydrofolate + H(+). Attaches a formyl group to the free amino group of methionyl-tRNA(fMet). The formyl group appears to play a dual role in the initiator identity of N-formylmethionyl-tRNA by promoting its recognition by IF2 and preventing the misappropriation of this tRNA by the elongation apparatus. The chain is Methionyl-tRNA formyltransferase from Trichlorobacter lovleyi (strain ATCC BAA-1151 / DSM 17278 / SZ) (Geobacter lovleyi).